The sequence spans 892 residues: Protein argonaute 11 (892 aa).

A compositionally biased stretch (gly residues) spans 1-17; sequence MSSRGGGVGGRRGGPGG. 2 disordered regions span residues 1–68 and 86–117; these read MSSR…ALQP and MEAREGASSSSSASAPAVGEVEPPSRAVGALP. Low complexity predominate over residues 86-107; it reads MEAREGASSSSSASAPAVGEVE. Residues 248–362 form the PAZ domain; sequence SLKQFLAGTY…LPMEVCRIVK (115 aa). One can recognise a Piwi domain in the interval 541–848; the sequence is LLVIVLPDAN…AASRARHYLE (308 aa). A disordered region spans residues 850–876; it reads GSLPDHGSSSASAAGGSRRNDRGVPVK. The span at 856 to 866 shows a compositional bias: low complexity; sequence GSSSASAAGGS. Basic and acidic residues predominate over residues 867 to 876; it reads RRNDRGVPVK.

It belongs to the argonaute family. Ago subfamily.

Functionally, probably involved in the RNA silencing pathway. May bind to short RNAs such as microRNAs (miRNAs) or short interfering RNAs (siRNAs), and represses the translation of mRNAs which are complementary to them. The sequence is that of Protein argonaute 11 (AGO11) from Oryza sativa subsp. japonica (Rice).